The primary structure comprises 393 residues: Cysteine protease ATG4B (393 aa).

Met1 carries the N-acetylmethionine modification. A Phosphoserine modification is found at Ser34. The active-site Nucleophile is the Cys74. S-nitrosocysteine is present on Cys189. Residues Asp278 and His280 contribute to the active site. An S-nitrosocysteine mark is found at Cys292 and Cys301. Cys292 and Cys361 are disulfide-bonded. Phosphoserine is present on residues Ser316 and Ser383. The short motif at 388 to 391 (FEIL) is the LIR element. Ser392 bears the Phosphoserine mark.

It belongs to the peptidase C54 family. As to quaternary structure, interacts with PFKP; promoting phosphorylation of ATG4B at Ser-34. Interacts with GBP7. In terms of processing, phosphorylation at Ser-383 and Ser-392 promotes autophagy by increasing protein delipidation activity without affecting proteolytic activation of ATG8 proteins. Phosphorylation at Ser-316 by ULK1 inhibits autophagy by decreasing both proteolytic activation and delipidation activities. Phosphorylation at Ser-316 is dephosphorylated by protein phosphatase 2A (PP2A). Phosphorylation at Ser-34 by AKT2 promotes its hydrolase activity, leading to increased proteolytic activation and delipidation of ATG8 family proteins. Phosphorylation at Ser-34 by AKT1 promotes mitochondrial localization and inhibition of the F1F0-ATP synthase activity, leading to elevation of mitochondrial reactive oxygen species (ROS). Post-translationally, ubiquitinated by RNF5, leading to its degradation by the proteasome. S-nitrosylation at Cys-189 and Cys-292 in response to high glucose decreases both proteolytic activation and delipidation activities. In terms of processing, O-glycosylated by OGT, leading to increase protease activity, thereby promoting the proteolytic activation of ATG8 family proteins. Post-translationally, forms reversible intrachain disulfide bonds in response to oxidative stress. Forms interchain disulfide bonds, leading to formation of homooligomers in response to oxidation.

It localises to the cytoplasm. It is found in the cytosol. The protein resides in the cytoplasmic vesicle. The protein localises to the autophagosome. Its subcellular location is the endoplasmic reticulum. It localises to the mitochondrion. The catalysed reaction is [protein]-C-terminal L-amino acid-glycyl-phosphatidylethanolamide + H2O = [protein]-C-terminal L-amino acid-glycine + a 1,2-diacyl-sn-glycero-3-phosphoethanolamine. It catalyses the reaction [protein]-C-terminal L-amino acid-glycyl-phosphatidylserine + H2O = [protein]-C-terminal L-amino acid-glycine + a 1,2-diacyl-sn-glycero-3-phospho-L-serine. Its activity is regulated as follows. Inhibited by N-ethylmaleimide. Redox-regulated during autophagy since reducing conditions activate ATG4A whereas an oxidizing environment such as the presence of H(2)O(2) inhibits its activity. The cysteine protease activity compounds is inhibited by styrylquinoline compounds 4-28 and LV-320. Its function is as follows. Cysteine protease that plays a key role in autophagy by mediating both proteolytic activation and delipidation of ATG8 family proteins. Required for canonical autophagy (macroautophagy), non-canonical autophagy as well as for mitophagy. The protease activity is required for proteolytic activation of ATG8 family proteins: cleaves the C-terminal amino acid of ATG8 proteins MAP1LC3A, MAP1LC3B, MAP1LC3C, GABARAPL1, GABARAPL2 and GABARAP, to reveal a C-terminal glycine. Exposure of the glycine at the C-terminus is essential for ATG8 proteins conjugation to phosphatidylethanolamine (PE) and insertion to membranes, which is necessary for autophagy. Protease activity is also required to counteract formation of high-molecular weight conjugates of ATG8 proteins (ATG8ylation): acts as a deubiquitinating-like enzyme that removes ATG8 conjugated to other proteins, such as ATG3. In addition to the protease activity, also mediates delipidation of ATG8 family proteins. Catalyzes delipidation of PE-conjugated forms of ATG8 proteins during macroautophagy. Also involved in non-canonical autophagy, a parallel pathway involving conjugation of ATG8 proteins to single membranes at endolysosomal compartments, by catalyzing delipidation of ATG8 proteins conjugated to phosphatidylserine (PS). Compared to other members of the family (ATG4A, ATG4C or ATG4C), constitutes the major protein for proteolytic activation of ATG8 proteins, while it displays weaker delipidation activity than other ATG4 paralogs. Involved in phagophore growth during mitophagy independently of its protease activity and of ATG8 proteins: acts by regulating ATG9A trafficking to mitochondria and promoting phagophore-endoplasmic reticulum contacts during the lipid transfer phase of mitophagy. This is Cysteine protease ATG4B from Mus musculus (Mouse).